Reading from the N-terminus, the 30-residue chain is Ribosome-inactivating protein momorcochin-S (30 aa).

Belongs to the ribosome-inactivating protein family. Type 1 RIP subfamily. Glycosylated.

It carries out the reaction Endohydrolysis of the N-glycosidic bond at one specific adenosine on the 28S rRNA.. In terms of biological role, inactivates eukaryotic 60S ribosomal subunits. The chain is Ribosome-inactivating protein momorcochin-S from Momordica cochinchinensis (Spiny bitter cucumber).